The sequence spans 1751 residues: Non-reducing polyketide synthase afvB (1751 aa).

The tract at residues phenylalanine 19–histidine 249 is N-terminal acylcarrier protein transacylase domain (SAT). One can recognise a Ketosynthase family 3 (KS3) domain in the interval histidine 381–glutamate 811. Residues cysteine 554, histidine 689, and histidine 730 each act as for beta-ketoacyl synthase activity in the active site. Residues phenylalanine 910–valine 1228 form a malonyl-CoA:ACP transacylase (MAT) domain region. The tract at residues threonine 1291–aspartate 1607 is product template (PT) domain. The interval histidine 1295–serine 1429 is N-terminal hotdog fold. In terms of domain architecture, PKS/mFAS DH spans histidine 1295–serine 1603. Catalysis depends on histidine 1327, which acts as the Proton acceptor; for dehydratase activity. The C-terminal hotdog fold stretch occupies residues leucine 1456 to serine 1603. Aspartate 1514 acts as the Proton donor; for dehydratase activity in catalysis. Residues aspartate 1610–asparagine 1670 are disordered. Residues glutamine 1612 to glutamate 1657 show a composition bias toward polar residues. The region spanning asparagine 1670 to glutamine 1747 is the Carrier domain. Serine 1707 bears the O-(pantetheine 4'-phosphoryl)serine mark.

Pantetheine 4'-phosphate is required as a cofactor. In terms of tissue distribution, expressed mainly in sclerotia, with expression levels 20-fold and 10-fold greater than the expression levels of this gene found in mycelium and conidia, respectively.

Its pathway is secondary metabolite biosynthesis. Its function is as follows. Non-reducing polyketide synthase (NRPKS); part of the gene cluster that mediates the biosynthesis of aflavarin, a bicoumarin that exhibits anti-insectan activity against the fungivorous beetle C.hemipterus. Catalyzes the formation of the aromatic polyketide from acetyl coenzyme A and seven malonyl coenzyme A molecules. In Aspergillus flavus (strain ATCC 200026 / FGSC A1120 / IAM 13836 / NRRL 3357 / JCM 12722 / SRRC 167), this protein is Non-reducing polyketide synthase afvB.